The following is a 497-amino-acid chain: Delayed-rectifier potassium channel regulatory subunit KCNS1 (497 aa).

The Cytoplasmic portion of the chain corresponds to 1 to 186 (MVSEFPGPGS…LTMENPGYSL (186 aa)). Residues 187 to 208 (PSKLFSCVSIGVVLASIAAMCI) traverse the membrane as a helical segment. Topologically, residues 209–239 (HSLPEYQAREAAAAVAAVAAGRSAEDVRDDP) are extracellular. Residues 240-262 (VLRRLEYFCIAWFSFEVSSRLLL) form a helical membrane-spanning segment. Residues 263–273 (APSTRNFFCHP) lie on the Cytoplasmic side of the membrane. The chain crosses the membrane as a helical span at residues 274–291 (LNLIDIVSVLPFYLTLLA). Residues 292 to 309 (GAALGDRRGASGEELGDL) lie on the Extracellular side of the membrane. The chain crosses the membrane as a helical; Voltage-sensor span at residues 310–330 (GKVVQVFRLMRIFRVLKLARH). Topologically, residues 331 to 345 (STGLRSLGATLKHSY) are cytoplasmic. Residues 346-367 (REVGILLLYLAVGVSVFSGVAY) form a helical membrane-spanning segment. Over 368-379 (TAEEKNVGFDTI) the chain is Extracellular. Positions 380-391 (PACWWWGTVSMT) form an intramembrane region, helical. The Selectivity filter signature appears at 392–397 (TVGYGD). The stretch at 392–399 (TVGYGDVV) is an intramembrane region. Over 400-406 (PETVAGK) the chain is Extracellular. The helical transmembrane segment at 407–435 (LAASGCILGGILVVALPITIIFNKFSHFY) threads the bilayer. Over 436–497 (RRQKALEAAV…PSEPAKSHSY (62 aa)) the chain is Cytoplasmic. The segment at 464–497 (SDVSLETSRETSQEGRSTDLETQAPSEPAKSHSY) is disordered. Residues 470-482 (TSRETSQEGRSTD) are compositionally biased toward basic and acidic residues.

The protein belongs to the potassium channel family. S (TC 1.A.1.2) subfamily. Kv9.1/KCNS1 sub-subfamily. Heterotetramer with KCNB1. Heterotetramer with KCNB2. Does not form homomultimers. In terms of tissue distribution, highly expressed in brain, but not in the other tissues tested.

The protein resides in the cell membrane. Potassium channel regulatory subunit that modulate the delayed rectifier voltage-gated potassium channel activity of KCNB1 and KCNB2 by altering their kinetics, expression levels, and shifting the half-inactivation potential to more polarized values. While it does not form functional channels on its own, it can form functional heterotetrameric channels with KCNB1 and KCNB2. Each regulatory subunit has unique regulatory properties that can lead to extensive inhibition, significant changes in kinetics, and/or substantial shifts in the voltage dependencies of the inactivation process. The protein is Delayed-rectifier potassium channel regulatory subunit KCNS1 of Rattus norvegicus (Rat).